Here is a 1393-residue protein sequence, read N- to C-terminus: DNA-directed RNA polymerase subunit beta' (1393 aa).

Zn(2+) is bound by residues C71, C73, C86, and C89. Mg(2+) is bound by residues D462, D464, and D466. The Zn(2+) site is built by C811, C885, C892, and C895.

It belongs to the RNA polymerase beta' chain family. In terms of assembly, the RNAP catalytic core consists of 2 alpha, 1 beta, 1 beta' and 1 omega subunit. When a sigma factor is associated with the core the holoenzyme is formed, which can initiate transcription. Requires Mg(2+) as cofactor. The cofactor is Zn(2+).

It carries out the reaction RNA(n) + a ribonucleoside 5'-triphosphate = RNA(n+1) + diphosphate. DNA-dependent RNA polymerase catalyzes the transcription of DNA into RNA using the four ribonucleoside triphosphates as substrates. The protein is DNA-directed RNA polymerase subunit beta' of Azorhizobium caulinodans (strain ATCC 43989 / DSM 5975 / JCM 20966 / LMG 6465 / NBRC 14845 / NCIMB 13405 / ORS 571).